A 480-amino-acid chain; its full sequence is ATP synthase subunit beta (480 aa).

158 to 165 lines the ATP pocket; it reads GGAGVGKT.

The protein belongs to the ATPase alpha/beta chains family. In terms of assembly, F-type ATPases have 2 components, CF(1) - the catalytic core - and CF(0) - the membrane proton channel. CF(1) has five subunits: alpha(3), beta(3), gamma(1), delta(1), epsilon(1). CF(0) has three main subunits: a(1), b(2) and c(9-12). The alpha and beta chains form an alternating ring which encloses part of the gamma chain. CF(1) is attached to CF(0) by a central stalk formed by the gamma and epsilon chains, while a peripheral stalk is formed by the delta and b chains.

It localises to the cell inner membrane. The enzyme catalyses ATP + H2O + 4 H(+)(in) = ADP + phosphate + 5 H(+)(out). Produces ATP from ADP in the presence of a proton gradient across the membrane. The catalytic sites are hosted primarily by the beta subunits. This Acidobacterium capsulatum (strain ATCC 51196 / DSM 11244 / BCRC 80197 / JCM 7670 / NBRC 15755 / NCIMB 13165 / 161) protein is ATP synthase subunit beta.